The primary structure comprises 356 residues: tRNA N6-adenosine threonylcarbamoyltransferase (356 aa).

Fe cation is bound by residues histidine 110 and histidine 114. Substrate is bound by residues 132–136 (LVSGG), aspartate 165, glycine 178, aspartate 182, and asparagine 288. Position 316 (aspartate 316) interacts with Fe cation.

Belongs to the KAE1 / TsaD family. Fe(2+) serves as cofactor.

It is found in the cytoplasm. The enzyme catalyses L-threonylcarbamoyladenylate + adenosine(37) in tRNA = N(6)-L-threonylcarbamoyladenosine(37) in tRNA + AMP + H(+). Functionally, required for the formation of a threonylcarbamoyl group on adenosine at position 37 (t(6)A37) in tRNAs that read codons beginning with adenine. Is involved in the transfer of the threonylcarbamoyl moiety of threonylcarbamoyl-AMP (TC-AMP) to the N6 group of A37, together with TsaE and TsaB. TsaD likely plays a direct catalytic role in this reaction. The chain is tRNA N6-adenosine threonylcarbamoyltransferase from Maridesulfovibrio salexigens (strain ATCC 14822 / DSM 2638 / NCIMB 8403 / VKM B-1763) (Desulfovibrio salexigens).